A 201-amino-acid polypeptide reads, in one-letter code: MIALIDYKAGNLNSVAKAFEKIGAINFIAKNPKDLQKADKLLLPGVGSFKEAMKNLKELGFIEALKEQVLVQKKPILGICLGMQLFLERGYEGGVCEGLGFIEGEVVKFEEDLNLKIPHMGWNELEILKQDPLYQGINNKSDFYFVHSFYVKCKDEFVSAKAQYGHKFVASLQKDRIFATQFHPEKSQNLGLKLLENFARL.

Residues 1–201 (MIALIDYKAG…LKLLENFARL (201 aa)) enclose the Glutamine amidotransferase type-1 domain. The active-site Nucleophile is C80. Residues H183 and E185 contribute to the active site.

Heterodimer of HisH and HisF.

It localises to the cytoplasm. The catalysed reaction is 5-[(5-phospho-1-deoxy-D-ribulos-1-ylimino)methylamino]-1-(5-phospho-beta-D-ribosyl)imidazole-4-carboxamide + L-glutamine = D-erythro-1-(imidazol-4-yl)glycerol 3-phosphate + 5-amino-1-(5-phospho-beta-D-ribosyl)imidazole-4-carboxamide + L-glutamate + H(+). It carries out the reaction L-glutamine + H2O = L-glutamate + NH4(+). Its pathway is amino-acid biosynthesis; L-histidine biosynthesis; L-histidine from 5-phospho-alpha-D-ribose 1-diphosphate: step 5/9. IGPS catalyzes the conversion of PRFAR and glutamine to IGP, AICAR and glutamate. The HisH subunit provides the glutamine amidotransferase activity that produces the ammonia necessary to HisF for the synthesis of IGP and AICAR. The chain is Imidazole glycerol phosphate synthase subunit HisH 1 (hisH1) from Campylobacter jejuni subsp. jejuni serotype O:23/36 (strain 81-176).